The chain runs to 88 residues: Large ribosomal subunit protein eL31 (88 aa).

The protein belongs to the eukaryotic ribosomal protein eL31 family.

The protein is Large ribosomal subunit protein eL31 of Methanoregula boonei (strain DSM 21154 / JCM 14090 / 6A8).